The chain runs to 92 residues: Defensin Lucifensin (92 aa).

The first 23 residues, 1–23 (MKFFMVFAVTFCLALSFVSQSLA), serve as a signal peptide directing secretion. Residues 24–52 (LPADDEAHFVDGLEALKTIEPELHGRYKR) constitute a propeptide that is removed on maturation. 3 cysteine pairs are disulfide-bonded: C55/C82, C68/C88, and C72/C90.

The protein belongs to the invertebrate defensin family. Type 1 subfamily. In terms of processing, the disulfide bonds are essential for antimicrobial activity. In terms of tissue distribution, larval fat body, hemolymph and salivary glands (at protein level). Expressed in the salivary glands of all larval stages.

It is found in the secreted. It localises to the host cell membrane. In terms of biological role, shows strong antibacterial activity against numerous Gram-positive bacteria. It selectively inhibits peptidoglycan biosynthesis through complex formation with the cell wall precursor lipid II (1:1 molar ratio) thus inhibiting cell wall synthesis. Shows antibacterial activity against the Gram-positive bacteria M.luteus, E.fecalis (MIC=32 mg/L), S.aureus (MIC=16 mg/L), S.carnosus (MIC=2 mg/L), S.pneumoniae (MIC=2 mg/L) and S.pyogenes (MIC=2 mg/L) and against a number of methicillin-resistant S.aureus and glycopeptide-intermediate S.aureus isolates. Does not show antibacterial activity against Gram-negative bacteria or antifungal activity against C.utilis. Shows slight antifungal activity against C.albicans. The protein is Defensin Lucifensin of Lucilia sericata (Green bottle fly).